Reading from the N-terminus, the 249-residue chain is Acidic leucine-rich nuclear phosphoprotein 32 family member A (249 aa).

Position 15 is a phosphothreonine (threonine 15). At serine 17 the chain carries Phosphoserine. LRR repeat units lie at residues aspartate 18–threonine 38, glutamate 43–asparagine 64, lysine 65–cysteine 87, and asparagine 89–lysine 110. An LRRCT domain is found at cysteine 123–glutamate 161. Basic and acidic residues predominate over residues glycine 147–proline 156. A disordered region spans residues glycine 147–aspartate 249. The tract at residues arginine 150–glutamate 174 is necessary for tumor-suppressive function. A compositionally biased stretch (acidic residues) spans aspartate 157 to glutamate 230. 2 positions are modified to phosphoserine; by CK2: serine 158 and serine 204. Residues glutamate 165–aspartate 249 are interaction with E4F1.

This sequence belongs to the ANP32 family. In terms of assembly, component of the SET complex, composed of at least ANP32A, APEX1, HMGB2, NME1, SET and TREX1. Directly interacts with SET. Interacts with ATXN1/SCA1. Interacts with MAP1B. Interacts with ELAVL1. Part of the INHAT (inhibitor of histone acetyltransferases) complex. Interacts with E4F1. As to quaternary structure, (Microbial infection) Interacts (via C-terminus) with influenza virus A protein PB2; this interaction promotes viral replication. (Microbial infection) Interacts (via C-terminus) with influenza virus B protein PB2; this interaction promotes viral replication. In terms of assembly, (Microbial infection) Interacts (via C-terminus) with influenza virus C protein PB2; this interaction promotes viral replication by bridging viral replicase dimers together. Post-translationally, phosphorylated on serine residues, at least in part by casein kinase 2/CK2. In terms of processing, the N-terminus is blocked. Some glutamate residues are glycylated by TTLL8. This modification occurs exclusively on glutamate residues and results in a glycine chain on the gamma-carboxyl group. Expressed in all tissues tested. Highly expressed in kidney and skeletal muscle, moderate levels of expression in brain, placenta and pancreas, and weakly expressed in lung. Found in all regions of the brain examined (amygdala, caudate nucleus, corpus callosum, hippocampus and thalamus), with highest levels in amygdala.

It localises to the nucleus. It is found in the cytoplasm. The protein resides in the endoplasmic reticulum. Functionally, multifunctional protein that is involved in the regulation of many processes including tumor suppression, apoptosis, cell cycle progression or transcription. Promotes apoptosis by favouring the activation of caspase-9/CASP9 and allowing apoptosome formation. In addition, plays a role in the modulation of histone acetylation and transcription as part of the INHAT (inhibitor of histone acetyltransferases) complex. Inhibits the histone-acetyltranferase activity of EP300/CREBBP (CREB-binding protein) and EP300/CREBBP-associated factor by histone masking. Preferentially binds to unmodified histone H3 and sterically inhibiting its acetylation and phosphorylation leading to cell growth inhibition. Participates in other biochemical processes such as regulation of mRNA nuclear-to-cytoplasmic translocation and stability by its association with ELAVL1 (Hu-antigen R). Plays a role in E4F1-mediated transcriptional repression as well as inhibition of protein phosphatase 2A. (Microbial infection) Plays an essential role in influenza A, B and C viral genome replication. Mechanistically, mediates the assembly of the viral replicase asymmetric dimers composed of PB1, PB2 and PA via its N-terminal region. Also plays an essential role in foamy virus mRNA export from the nucleus. In Homo sapiens (Human), this protein is Acidic leucine-rich nuclear phosphoprotein 32 family member A (ANP32A).